Consider the following 258-residue polypeptide: Imidazole glycerol phosphate synthase subunit HisF (258 aa).

Active-site residues include Asp11 and Asp130.

The protein belongs to the HisA/HisF family. Heterodimer of HisH and HisF.

The protein resides in the cytoplasm. The enzyme catalyses 5-[(5-phospho-1-deoxy-D-ribulos-1-ylimino)methylamino]-1-(5-phospho-beta-D-ribosyl)imidazole-4-carboxamide + L-glutamine = D-erythro-1-(imidazol-4-yl)glycerol 3-phosphate + 5-amino-1-(5-phospho-beta-D-ribosyl)imidazole-4-carboxamide + L-glutamate + H(+). Its pathway is amino-acid biosynthesis; L-histidine biosynthesis; L-histidine from 5-phospho-alpha-D-ribose 1-diphosphate: step 5/9. IGPS catalyzes the conversion of PRFAR and glutamine to IGP, AICAR and glutamate. The HisF subunit catalyzes the cyclization activity that produces IGP and AICAR from PRFAR using the ammonia provided by the HisH subunit. This Methylorubrum extorquens (strain PA1) (Methylobacterium extorquens) protein is Imidazole glycerol phosphate synthase subunit HisF.